Here is a 362-residue protein sequence, read N- to C-terminus: Histidinol-phosphate aminotransferase (362 aa).

Position 218 is an N6-(pyridoxal phosphate)lysine (lysine 218).

Belongs to the class-II pyridoxal-phosphate-dependent aminotransferase family. Histidinol-phosphate aminotransferase subfamily. As to quaternary structure, homodimer. The cofactor is pyridoxal 5'-phosphate.

The enzyme catalyses L-histidinol phosphate + 2-oxoglutarate = 3-(imidazol-4-yl)-2-oxopropyl phosphate + L-glutamate. It functions in the pathway amino-acid biosynthesis; L-histidine biosynthesis; L-histidine from 5-phospho-alpha-D-ribose 1-diphosphate: step 7/9. The sequence is that of Histidinol-phosphate aminotransferase from Xanthomonas campestris pv. campestris (strain 8004).